A 208-amino-acid polypeptide reads, in one-letter code: MKNVRLISHPLIEHKLAILRDKNTQPFQFRMLVDEISHLMIFEATRDLNLREISVQTPVATTKARKLATKVMICPILRAALGMLDSVFTIIPDASVGFLGFQRNEKTAQAEFFYAKLPKDAKSRLAIIIDPMFATGGTAIDAVKFLRENSVKQIKFISIIAAPEGLRRFSEIYPDVEVYTAAIDERLNEKNYIVPGLGDAGDRVFNTL.

5-phospho-alpha-D-ribose 1-diphosphate contacts are provided by residues R78, R103, and 130 to 138; that span reads DPMFATGGT. Uracil-binding positions include I193 and 198–200; that span reads GDA. D199 lines the 5-phospho-alpha-D-ribose 1-diphosphate pocket.

It belongs to the UPRTase family. Mg(2+) is required as a cofactor.

The enzyme catalyses UMP + diphosphate = 5-phospho-alpha-D-ribose 1-diphosphate + uracil. It functions in the pathway pyrimidine metabolism; UMP biosynthesis via salvage pathway; UMP from uracil: step 1/1. With respect to regulation, allosterically activated by GTP. Its function is as follows. Catalyzes the conversion of uracil and 5-phospho-alpha-D-ribose 1-diphosphate (PRPP) to UMP and diphosphate. The polypeptide is Uracil phosphoribosyltransferase (Campylobacter curvus (strain 525.92)).